Here is a 493-residue protein sequence, read N- to C-terminus: MFS-type transporter efuF (493 aa).

Helical transmembrane passes span 90-110, 117-137, 147-167, 179-199, 211-231, 279-299, 316-336, 343-363, 370-390, 406-426, and 435-455; these read ITLV…NMLL, IMLP…CAVH, LLMG…LTTF, IFYG…YGVF, FLMI…YWHL, IALY…VGNF, LYTV…CTSS, STHL…LITL, GPTY…SCIF, AVTG…SLAF, and IPAL…VLGF.

This sequence belongs to the major facilitator superfamily.

It localises to the membrane. Functionally, MFS-type transporter; part of the gene cluster that mediates the biosynthesis of enfumafungin, a glycosylated fernene-type triterpenoid with potent antifungal activity, mediated by its interaction with beta-1,3-glucan synthase and the fungal cell wall. Might facilitate the transport of glucose units to the subcellular site of enfumafungin biosynthesis. This Hormonema carpetanum protein is MFS-type transporter efuF.